The sequence spans 158 residues: MEQGVVEELIHLQLPEVEAVDVVNVPDGNGDGDGDGDGDGNDAWERQLDEVQMQAMRLENPQVAMLLDAPHEPPIELHHMLEPVNVPQRPRKKRSFLTISKPFHVQPERCALISNGWRAVQCVQPEKRGEYFANYLIKHMNSRNYPNGEGLPNRWGQF.

The tract at residues 24-43 (NVPDGNGDGDGDGDGDGNDA) is disordered. Positions 30-42 (GDGDGDGDGDGND) are enriched in acidic residues.

It belongs to the male-specific scotti family.

Post-meiotically transcribed gene that has a role in late spermiogenesis; required for actin cone progression during spermatid individualization. The polypeptide is Male-specific protein scotti (Drosophila virilis (Fruit fly)).